The chain runs to 226 residues: PDGF-related-transforming protein sis (226 aa).

Positions 201–215 (RRPPKGKHRKCKHTH) are enriched in basic residues. A disordered region spans residues 201–226 (RRPPKGKHRKCKHTHDKTALKETLGA).

Belongs to the PDGF/VEGF growth factor family.

This chain is PDGF-related-transforming protein sis (V-SIS), found in Woolly monkey sarcoma virus (WMSV).